The chain runs to 107 residues: Flagellar hook-basal body complex protein FliE (107 aa).

Belongs to the FliE family.

It localises to the bacterial flagellum basal body. The chain is Flagellar hook-basal body complex protein FliE from Sodalis glossinidius (strain morsitans).